The following is a 161-amino-acid chain: Glycine/sarcosine/betaine reductase complex component A2 (161 aa).

Sec42 is a catalytic residue. Position 42 (Sec42) is a non-standard amino acid, selenocysteine.

It belongs to the GrdA family. As to quaternary structure, monomer. Component of the glycine, sarcosine and betaine reductase complexes, together with components B and C.

The catalysed reaction is acetyl phosphate + [thioredoxin]-disulfide + NH4(+) + H2O = [thioredoxin]-dithiol + glycine + phosphate + H(+). It catalyses the reaction acetyl phosphate + methylamine + [thioredoxin]-disulfide + H2O = sarcosine + [thioredoxin]-dithiol + phosphate + H(+). It carries out the reaction acetyl phosphate + trimethylamine + [thioredoxin]-disulfide + H2O = glycine betaine + [thioredoxin]-dithiol + phosphate + H(+). In terms of biological role, in the first step of glycine, betaine and sarcosine reductases, the substrate is bound to component PB via a Schiff base intermediate. Then the PB-activated substrate is nucleophilically attacked by the selenol anion of component PA to transform it to a carboxymethylated selenoether and the respective amine. By action of component PC, acetyl phosphate is formed, leaving component PA in its oxidized state. Finally component PA becomes reduced by the thioredoxin system to start a new catalytic cycle of reductive deamination. The polypeptide is Glycine/sarcosine/betaine reductase complex component A2 (grdA2) (Photobacterium profundum (strain SS9)).